Consider the following 171-residue polypeptide: Terminase, small subunit (171 aa).

This sequence belongs to the P23virus small terminase family. Homononamer; forms a ring-like structure through which genomic DNA is translocated into the capsid. Heterodimer with the terminase large subunit; the active complex is probably heterooligomeric.

In terms of biological role, the terminase small subunit binds to the packaging initiation site and regulates the ATPase activity of the terminase large subunit. The terminase lies at a unique vertex of the procapsid and is composed of two subunits, a small terminase subunit involved in viral DNA recognition (packaging sequence), and a large terminase subunit. Both terminase subunits heterooligomerize and are docked on the portal protein to form the packaging machine. This is Terminase, small subunit from Thermus virus P23-45 (Thermus thermophilus phage P23-45).